The primary structure comprises 157 residues: Beta-defensin 125 (157 aa).

Positions 1–20 are cleaved as a signal peptide; sequence MNLLMLTFIICGLLTQVTKG. Cystine bridges form between cysteine 27–cysteine 55, cysteine 35–cysteine 49, and cysteine 39–cysteine 56. Residues 109 to 157 are disordered; the sequence is GETITPETNTPETTMPPSETTSSKTTMPPSETATSETMPPPSQTALTHN. A compositionally biased stretch (low complexity) spans 110–140; the sequence is ETITPETNTPETTMPPSETTSSKTTMPPSET. A compositionally biased stretch (polar residues) spans 141–157; that stretch reads ATSETMPPPSQTALTHN.

This sequence belongs to the beta-defensin family.

It localises to the secreted. Functionally, has antibacterial activity. This is Beta-defensin 125 (DEFB125) from Pongo pygmaeus (Bornean orangutan).